Reading from the N-terminus, the 448-residue chain is MFQALSDGFKNALNKIRFQDDEKALDRALDELKKTLLKNDVHHKVARELLKKVESQTKLNGIGKQQFLDALEKSLLEILSAKGSSGFTFAQTPPTVVLMAGLQGSGKTTTTAKLAHYLKTKNKKVLLCACDLQRLAAVEQLKVLGEQVGVEVFYEENKSVKEIASNALKRAKEAQFDVLLVDSAGRLAIDKELMQELKEVKEILNPHEVLYVADALSGQDGVKSANTFNEEIGVSGVVLSKFDSDSKGGIALGITYQLGLPLRFIGSGEKIPDLDVFVPERIVGRLMGAGDIVSLAEKTASVLNPNEAKDLSKKLKKGQFTFNDFLNQIEKVKKLGSMSSLISMIPGLGNMASALKDTDLESSLEVKKIKAMVNSMTKKEQENPEILNGSRRKRIALGSGLEVSEINRIIKRFDQASKMAKRLTNKKGISDLMNLMSQAKNQTPPKMR.

GTP is bound by residues 101-108 (GLQGSGKT), 182-186 (DSAGR), and 240-243 (SKFD).

This sequence belongs to the GTP-binding SRP family. SRP54 subfamily. Part of the signal recognition particle protein translocation system, which is composed of SRP and FtsY. SRP is a ribonucleoprotein composed of Ffh and a 4.5S RNA molecule.

It localises to the cytoplasm. It carries out the reaction GTP + H2O = GDP + phosphate + H(+). Involved in targeting and insertion of nascent membrane proteins into the cytoplasmic membrane. Binds to the hydrophobic signal sequence of the ribosome-nascent chain (RNC) as it emerges from the ribosomes. The SRP-RNC complex is then targeted to the cytoplasmic membrane where it interacts with the SRP receptor FtsY. Interaction with FtsY leads to the transfer of the RNC complex to the Sec translocase for insertion into the membrane, the hydrolysis of GTP by both Ffh and FtsY, and the dissociation of the SRP-FtsY complex into the individual components. In Helicobacter pylori (strain ATCC 700392 / 26695) (Campylobacter pylori), this protein is Signal recognition particle protein.